Consider the following 122-residue polypeptide: Large ribosomal subunit protein bL17 (122 aa).

The protein belongs to the bacterial ribosomal protein bL17 family. Part of the 50S ribosomal subunit. Contacts protein L32.

The sequence is that of Large ribosomal subunit protein bL17 from Wigglesworthia glossinidia brevipalpis.